A 156-amino-acid chain; its full sequence is ATP synthase subunit b (156 aa).

Residues isoleucine 3–threonine 23 traverse the membrane as a helical segment.

Belongs to the ATPase B chain family. As to quaternary structure, F-type ATPases have 2 components, F(1) - the catalytic core - and F(0) - the membrane proton channel. F(1) has five subunits: alpha(3), beta(3), gamma(1), delta(1), epsilon(1). F(0) has three main subunits: a(1), b(2) and c(10-14). The alpha and beta chains form an alternating ring which encloses part of the gamma chain. F(1) is attached to F(0) by a central stalk formed by the gamma and epsilon chains, while a peripheral stalk is formed by the delta and b chains.

The protein resides in the cell inner membrane. Functionally, f(1)F(0) ATP synthase produces ATP from ADP in the presence of a proton or sodium gradient. F-type ATPases consist of two structural domains, F(1) containing the extramembraneous catalytic core and F(0) containing the membrane proton channel, linked together by a central stalk and a peripheral stalk. During catalysis, ATP synthesis in the catalytic domain of F(1) is coupled via a rotary mechanism of the central stalk subunits to proton translocation. Component of the F(0) channel, it forms part of the peripheral stalk, linking F(1) to F(0). In Xylella fastidiosa (strain M23), this protein is ATP synthase subunit b.